The chain runs to 379 residues: Protein PatA (379 aa).

Residues arginine 181–asparagine 226 form a disordered region. Over residues serine 186–proline 212 the composition is skewed to polar residues. The Response regulatory domain occupies threonine 262 to isoleucine 378. Aspartate 313 bears the 4-aspartylphosphate mark.

The protein resides in the cell septum. Its function is as follows. Controls heterocyst pattern formation. Required for the differentiation of intercalary heterocysts but not for terminal heterocysts. The polypeptide is Protein PatA (patA) (Nostoc sp. (strain PCC 7120 / SAG 25.82 / UTEX 2576)).